Consider the following 1091-residue polypeptide: MAAGCLLALTLTLFQSWLIGPSSEEPFPSPVTIKSWVDKMQEDLVTLAKTASGVTQLADIYEKYQDLYTVEPNNARQLVEIAARDIEKLLSNRSKALVRLAMEAEKVQAAHQWREDFASNEVVYYNAKDDLDPERNESESGSQRIKPVFIEDANFGRQISYQHAAVHIPTDIYEGSTIVLNELNWTSALDEVFKRNRDEDPTLLWQVFAADRLARYYPASPWVDNSRTPNKIDLYDVRRRPWYIQGAASPKDMLILVDVSGSVSGLTLKLIRTSVSEMLETLSDDDFVNVASFNSNAQDVSCFQHLVQANVRNKKVLKDAVNNITAKGITDYKKGFTFAFEQLLNYNVSRANCNKIIMLFTDGGEERAQEIFAKYNKDKKVRVFTFSVGQHNYDRGPIQWMACENKGYYYEIPSIGAIRINTQEYLDVLGRPMVLAGDKAKQVQWTNVYLDALELGLVITGTLPVFNVTGQSENKTNLKNQLILGVMGVDVSLEDIKRLTPRFTLCPNGYYFAIDPNGYVLLHPNLQPKNPKSQEPVTLDFLDAELENDIKVEIRNKMIDGESGEKTFRTLVKSQDERYIDKGNRTYTWTPVNGTDYRYLALVLPTYSFYYIKAKIEETITQARSKKGKMKDSETLKPDNFEESGYTFIAPREYCNDLKPSDNNTEFLLNFNEFIDRKTPNNPSCNTDLINRILLDAGFTNELVQNYWSKQKNIKGVKARFVVTDGGITRVYPKEAGENWQENPETYEDSFYKRSLDNDNYVFTAPYFNKSGPGAYESGIMVSKAVELYIQGKLLKPAVVGIKIDVNSWIENFTKTSIRDPCAGPVCDCKRNSDVMDCVILDDGGFLLMANHDDYTNQIGRFFGEIDPRMMRHLVNISLYAFNKSYDYQSVCDPGAAPKQGAGHRSAYVPSITDILQIGWWATAAAWSILQQLLLSLTFPRLLEAVEMEEDDFTASLSKQSCITEQTQYFFKNDTKSFSGLLDCGNCSRIFHVEKLMNTNLVFIMVESKGTCPCDTRLLMQAEQTSDGPDPCDMVKQPRYRKGPDVCFDNNVLEDYTDCGGVSGLNPSLWSIFGLQFILLWLVSGSRHYLW.

An N-terminal signal peptide occupies residues 1-24; sequence MAAGCLLALTLTLFQSWLIGPSSE. Topologically, residues 25-1061 are extracellular; that stretch reads EPFPSPVTIK…VLEDYTDCGG (1037 aa). The N-linked (GlcNAc...) asparagine glycan is linked to asparagine 92. A Phosphoserine modification is found at serine 119. Asparagine 136 and asparagine 184 each carry an N-linked (GlcNAc...) asparagine glycan. The VWFA domain occupies 252 to 429; sequence DMLILVDVSG…INTQEYLDVL (178 aa). Aspartate 258, serine 260, and serine 262 together coordinate a divalent metal cation. The MIDAS-like motif signature appears at 258-262; that stretch reads DVSGS. Residues asparagine 323 and asparagine 347 are each glycosylated (N-linked (GlcNAc...) asparagine). A disulfide bridge links cysteine 403 with cysteine 1047. The Cache domain maps to 445 to 536; the sequence is WTNVYLDALE…QPKNPKSQEP (92 aa). N-linked (GlcNAc...) asparagine glycosylation is found at asparagine 593, asparagine 769, asparagine 876, and asparagine 973. A helical membrane pass occupies residues 1062–1082; sequence VSGLNPSLWSIFGLQFILLWL. The Cytoplasmic portion of the chain corresponds to 1083–1091; it reads VSGSRHYLW.

Belongs to the calcium channel subunit alpha-2/delta family. Dimer formed of alpha-2-1 and delta-1 chains; disulfide-linked. Voltage-dependent calcium channels are multisubunit complexes, consisting of alpha-1 (CACNA1), alpha-2 (CACNA2D), beta (CACNB) and delta (CACNA2D) subunits in a 1:1:1:1 ratio. Post-translationally, proteolytically processed into subunits alpha-2-1 and delta-1 that are disulfide-linked.

The protein resides in the membrane. It localises to the cell membrane. Functionally, the alpha-2/delta subunit of voltage-dependent calcium channels regulates calcium current density and activation/inactivation kinetics of the calcium channel. Plays an important role in excitation-contraction coupling. The chain is Voltage-dependent calcium channel subunit alpha-2/delta-1 (Cacna2d1) from Rattus norvegicus (Rat).